A 122-amino-acid chain; its full sequence is Large ribosomal subunit protein uL14 (122 aa).

This sequence belongs to the universal ribosomal protein uL14 family. As to quaternary structure, part of the 50S ribosomal subunit. Forms a cluster with proteins L3 and L19. In the 70S ribosome, L14 and L19 interact and together make contacts with the 16S rRNA in bridges B5 and B8. Interacts with ribosomal silencing factor RsfS, which may inhibit ribosomal subunit association.

Binds to 23S rRNA. Forms part of two intersubunit bridges in the 70S ribosome. The polypeptide is Large ribosomal subunit protein uL14 (Treponema pallidum (strain Nichols)).